We begin with the raw amino-acid sequence, 434 residues long: 3-phosphoshikimate 1-carboxyvinyltransferase (434 aa).

The 3-phosphoshikimate site is built by lysine 22, serine 23, and arginine 27. Lysine 22 lines the phosphoenolpyruvate pocket. Glycine 93 and arginine 121 together coordinate phosphoenolpyruvate. 6 residues coordinate 3-phosphoshikimate: serine 168, serine 169, glutamine 170, serine 199, aspartate 320, and lysine 347. A phosphoenolpyruvate-binding site is contributed by glutamine 170. The active-site Proton acceptor is aspartate 320. Residues arginine 351, arginine 395, and lysine 420 each coordinate phosphoenolpyruvate.

The protein belongs to the EPSP synthase family. As to quaternary structure, monomer.

The protein localises to the cytoplasm. It carries out the reaction 3-phosphoshikimate + phosphoenolpyruvate = 5-O-(1-carboxyvinyl)-3-phosphoshikimate + phosphate. Its pathway is metabolic intermediate biosynthesis; chorismate biosynthesis; chorismate from D-erythrose 4-phosphate and phosphoenolpyruvate: step 6/7. In terms of biological role, catalyzes the transfer of the enolpyruvyl moiety of phosphoenolpyruvate (PEP) to the 5-hydroxyl of shikimate-3-phosphate (S3P) to produce enolpyruvyl shikimate-3-phosphate and inorganic phosphate. This Cupriavidus taiwanensis (strain DSM 17343 / BCRC 17206 / CCUG 44338 / CIP 107171 / LMG 19424 / R1) (Ralstonia taiwanensis (strain LMG 19424)) protein is 3-phosphoshikimate 1-carboxyvinyltransferase.